The chain runs to 156 residues: Large ribosomal subunit protein uL23 (156 aa).

A compositionally biased stretch (basic and acidic residues) spans 1-19 (MAPKAKKEAPAPPKVEAKA). The disordered stretch occupies residues 1–67 (MAPKAKKEAP…PKYPRKSAPR (67 aa)). A2 is subject to N,N,N-trimethylalanine. A Glycyl lysine isopeptide (Lys-Gly) (interchain with G-Cter in SUMO2) cross-link involves residue K14. A compositionally biased stretch (basic residues) spans 20–67 (KALKAKKAVLKGVHSHKKKKIRTSPTFRRPKTLRLRRQPKYPRKSAPR). The interval 32–74 (VHSHKKKKIRTSPTFRRPKTLRLRRQPKYPRKSAPRRNKLDHY) is beta-like import receptor binding (BIB) domain. Residue R41 is modified to Citrulline. S43 is subject to Phosphoserine. At T45 the chain carries Phosphothreonine. An N6-acetyllysine modification is found at K70.

It belongs to the universal ribosomal protein uL23 family. In terms of assembly, component of the large ribosomal subunit. Interacts with LYAR and GNL2. Interacts with MDM2; this interaction may promote MDM2-mediated p53/TP53 polyubiquitination. Directly interacts (via BIB domain) with IPO5, IPO7, KPNB1 and TNPO1; these interactions are involved in RPL23A nuclear import for the assembly of ribosomal subunits. Interacts with IPO8. Post-translationally, N-terminus is methylated by METTL11A/NTM1. In terms of processing, citrullinated by PADI4.

It localises to the cytoplasm. It is found in the nucleus. Component of the large ribosomal subunit. The ribosome is a large ribonucleoprotein complex responsible for the synthesis of proteins in the cell. Binds a specific region on the 26S rRNA. May promote p53/TP53 degradation possibly through the stimulation of MDM2-mediated TP53 polyubiquitination. This Oryctolagus cuniculus (Rabbit) protein is Large ribosomal subunit protein uL23 (RPL23A).